The chain runs to 237 residues: MIQLPPHHLPAEPRWFAPGAPGPAALPEHVTATGVGSWWADRALDPRAVAVSCAGHVLLSGDPGSVAPGLLAPFAHSHVEAPVRFLPVLGSAFDRVVPDERMVYIHREPVEPPRPPRGVTVRRLTPTDAPALAALSADSSWIYDSWGGPEGLAASEHGWAAVDRDGRVAAVACGYFTGQAYEDVAVLTTPERRRERLALACVTALCADITARAHGELVLRTREPPEPPAGLDGGLPA.

Residues 119-237 (VTVRRLTPTD…PAGLDGGLPA (119 aa)) form the N-acetyltransferase domain.

This is an uncharacterized protein from Streptomyces virginiae (Streptomyces cinnamonensis).